We begin with the raw amino-acid sequence, 956 residues long: Run domain Beclin-1-interacting and cysteine-rich domain-containing protein (956 aa).

The RUN domain maps to 49-190 (WSKYGGLERL…PRLLAQIDAS (142 aa)). Residues 50 to 181 (SKYGGLERLC…CLEAVEQNNP (132 aa)) form an interaction with PIK3C3 region. The residue at position 198 (Ser-198) is a Phosphoserine. The interaction with YWHAB stretch occupies residues 205-437 (SQSLTALPGS…ITIIVEDPIA (233 aa)). The span at 233 to 242 (SLQSMPQSSH) shows a compositional bias: low complexity. The disordered stretch occupies residues 233-423 (SLQSMPQSSH…TNIASRGAAG (191 aa)). Phosphoserine occurs at positions 250 and 268. Over residues 270 to 319 (AETQTTPAPLPSDSTLAQDSPLTAQEMSDSTLTSPLEASWVSSQNDSPSD) the composition is skewed to polar residues. Residues 302–585 (TSPLEASWVS…DLEIQDADIR (284 aa)) are interaction with UVRAG. Residues 339–371 (ASCESHSSNGESSSSHLFSSSSSQKLESAASSL) are compositionally biased toward low complexity. Residues 379 to 395 (QSQAGSVLRRSSFSEGQ) are compositionally biased toward polar residues. Phosphoserine occurs at positions 390, 412, 513, and 547. Positions 490-542 (AIELMKCNMMSQCLEEEEVEEEDSDREIQELKQKIRLRRQQIRTKNLLPAYRE) are interaction with BECN1. Residues 547–566 (SFRVTSSSSQFSSRDSTQLS) show a composition bias toward low complexity. The interval 547–579 (SFRVTSSSSQFSSRDSTQLSESGSAEDADDLEI) is disordered. The interval 552–609 (SSSSQFSSRDSTQLSESGSAEDADDLEIQDADIRRSAVSNGKSSFSQNLSHCFLHSTS) is interaction with CYBA. The segment covering 570-579 (SAEDADDLEI) has biased composition (acidic residues). Ser-655 is modified (phosphoserine). Residues 656-744 (PDDGQHADIY…HENAQMVVPS (89 aa)) form an interaction with CARD9 region. The segment at 705-956 (CAGCGIRTDP…ALEATVLETT (252 aa)) is interaction with Rab7.

As to quaternary structure, associates with PI3K (PI3KC3/PI3K-III/class III phosphatidylinositol 3-kinase) complex II (PI3KC3-C2) in which the core composed of the catalytic subunit PIK3C3, the regulatory subunit PIK3R4 and BECN1 is associated with UVRAG; in the complex interacts directly with PI3KC3 and UVRAG. Interacts with Rab7 (RAB7A or RAB7B) (GTP-bound form); Rab7 and UVRAG compete for RUBCN binding; can interact simultaneously with Rab7 and the PI3K complex. Interacts with CYBA and CYBB; indicative for the association with the CYBA:CYBB NADPH oxidase heterodimer. Interacts with NOX4 and probably associates with the CYBA:NOX4 complex. Interacts with YWHAB and CARD9 in a competitive and stimulation-dependent manner; RUBCN exchanges interaction from YWHAB to CARD9 upon stimulation with beta-1,3-glucan.

The protein localises to the late endosome. It localises to the lysosome. Its subcellular location is the early endosome. Functionally, inhibits PIK3C3 activity; under basal conditions negatively regulates PI3K complex II (PI3KC3-C2) function in autophagy. Negatively regulates endosome maturation and degradative endocytic trafficking and impairs autophagosome maturation process. Can sequester UVRAG from association with a class C Vps complex (possibly the HOPS complex) and negatively regulates Rab7 activation. In terms of biological role, involved in regulation of pathogen-specific host defense of activated macrophages. Following bacterial infection promotes NADH oxidase activity by association with CYBA thereby affecting TLR2 signaling and probably other TLR-NOX pathways. Stabilizes the CYBA:CYBB NADPH oxidase heterodimer, increases its association with TLR2 and its phagosome trafficking to induce antimicrobial burst of ROS and production of inflammatory cytokines. Following fungal or viral infection (implicating CLEC7A (dectin-1)-mediated myeloid cell activation or RIGI-dependent sensing of RNA viruses) negatively regulates pro-inflammatory cytokine production by association with CARD9 and sequestering it from signaling complexes. In Mus musculus (Mouse), this protein is Run domain Beclin-1-interacting and cysteine-rich domain-containing protein.